A 158-amino-acid chain; its full sequence is Large ribosomal subunit protein uL18 (158 aa).

It belongs to the universal ribosomal protein uL18 family. Part of the 50S ribosomal subunit. Contacts the 5S and 23S rRNAs.

Its function is as follows. This is one of the proteins that bind and probably mediate the attachment of the 5S RNA into the large ribosomal subunit, where it forms part of the central protuberance. The chain is Large ribosomal subunit protein uL18 from Picrophilus torridus (strain ATCC 700027 / DSM 9790 / JCM 10055 / NBRC 100828 / KAW 2/3).